The primary structure comprises 506 residues: MKEYQVYLERARSRQQDFLYPLIFREYIYGLAYSHNWSRSIFVENGGYDNKYSLLNVKRLITRMYQQNHLIISANDSPKNPFWGYNKNFDSQIISEGFAIVVEIPFFLQLNSSLKEAEIIKSYKNVRSIHSIFPFLEDKFTYLHYVSDIRIPYPIHLEILVQILRYWVKDAPFFHLLRLFLYHFSNWNRFITTKKSISTFSKRNPRLFLFLYNFYVCEYESIFLFLRNKSSHLRLKSFSVFLERIFFYAKREHLVEVFAKDFSYPLPFFKDPNIHYVRYQGKCILASKNVPFLMNKWKHYFIHLWQCFFDVWSQPRTININQLSEHSFQLLGYFSNVQLNRSVVRSQMLQNTFLIEIVSKKLDIIVPIIPLIRSLAKAKFCNVLGHPISKPVWADSSDFDIIERFLRICRNLSHYYNGSSKKKSLYRIKYILRLSCIKTLACKHKSTVRAFLKRSGSEELLEEFFTEEEEILSLIFPRDSFTLHRFYRNRIWYLDILFSNDLVNDE.

This sequence belongs to the intron maturase 2 family. MatK subfamily.

The protein resides in the plastid. It localises to the chloroplast. Functionally, usually encoded in the trnK tRNA gene intron. Probably assists in splicing its own and other chloroplast group II introns. The polypeptide is Maturase K (Trifolium striatum (Knotted clover)).